The following is a 45-amino-acid chain: Cytochrome b559 subunit beta (45 aa).

Residues Trp-20–Ala-36 traverse the membrane as a helical segment. His-24 contributes to the heme binding site.

Belongs to the PsbE/PsbF family. As to quaternary structure, heterodimer of an alpha subunit and a beta subunit. PSII is composed of 1 copy each of membrane proteins PsbA, PsbB, PsbC, PsbD, PsbE, PsbF, PsbH, PsbI, PsbJ, PsbK, PsbL, PsbM, PsbT, PsbX, PsbY, PsbZ, Psb30/Ycf12, peripheral proteins PsbO, CyanoQ (PsbQ), PsbU, PsbV and a large number of cofactors. It forms dimeric complexes. Heme b is required as a cofactor.

Its subcellular location is the cellular thylakoid membrane. Its function is as follows. This b-type cytochrome is tightly associated with the reaction center of photosystem II (PSII). PSII is a light-driven water:plastoquinone oxidoreductase that uses light energy to abstract electrons from H(2)O, generating O(2) and a proton gradient subsequently used for ATP formation. It consists of a core antenna complex that captures photons, and an electron transfer chain that converts photonic excitation into a charge separation. In Nostoc sp. (strain PCC 7120 / SAG 25.82 / UTEX 2576), this protein is Cytochrome b559 subunit beta.